Here is a 370-residue protein sequence, read N- to C-terminus: Coproporphyrin III ferrochelatase (370 aa).

Residues Ser58 and Tyr127 each contribute to the Fe-coproporphyrin III site. The Fe(2+) site is built by His189 and Glu276.

This sequence belongs to the ferrochelatase family.

It localises to the cytoplasm. The catalysed reaction is Fe-coproporphyrin III + 2 H(+) = coproporphyrin III + Fe(2+). It participates in porphyrin-containing compound metabolism; protoheme biosynthesis. Involved in coproporphyrin-dependent heme b biosynthesis. Catalyzes the insertion of ferrous iron into coproporphyrin III to form Fe-coproporphyrin III. In Corynebacterium glutamicum (strain ATCC 13032 / DSM 20300 / JCM 1318 / BCRC 11384 / CCUG 27702 / LMG 3730 / NBRC 12168 / NCIMB 10025 / NRRL B-2784 / 534), this protein is Coproporphyrin III ferrochelatase.